Consider the following 746-residue polypeptide: MGQTGKKSEKGPVCWRKRVKSEYMRLRQLKRFRRADEVKSMFSSNRQKILERTEILNQEWKQRRIQPVHILTSVSSLRGTRECSVTSDLDFPTQVIPLKTLNAVASVPIMYSWSPLQQNFMVEDETVLHNIPYMGDEVLDQDGTFIEELIKNYDGKVHGDRECGFINDEIFVELVNALGQYNDDDDDDDGDDPEEREEKQKDLEDHRDDKESRPPRKFPSDKIFEAISSMFPDKGTAEELKEKYKELTEQQLPGALPPECTPNIDGPNAKSVQREQSLHSFHTLFCRRCFKYDCFLHPFHATPNAYKRKNTETALDNKPCGPQCYQHLEGAKEFAAALTAERIKTPPKRPGGRRRGRLPNNSSRPSTPTINVLESKDTDSDREAGTETGGENNDKEEEEKKDETSSSSEANSRCQTPIKMKPNIEPPENVEWSGAEASMFRVLIGTYYDNFCAIARLIGTKTCRQVYEFRVKESSIIAPAPAEDVDTPPRKKKRKHRLWAAHCRKIQLKKDGSSNHVYNYQPCDHPRQPCDSSCPCVIAQNFCEKFCQCSSECQNRFPGCRCKAQCNTKQCPCYLAVRECDPDLCLTCGAADHWDSKNVSCKNCSIQRGSKKHLLLAPSDVAGWGIFIKDPVQKNEFISEYCGEIISQDEADRRGKVYDKYMCSFLFNLNNDFVVDATRKGNKIRFANHSVNPNCYAKVMMVNGDHRIGIFAKRAIQTGEELFFDYRYSQADALKYVGIEREMEIP.

Residues 1–340 (MGQTGKKSEK…AKEFAAALTA (340 aa)) form an interaction with DNMT1, DNMT3A and DNMT3B region. Ser-21 is modified (phosphoserine; by PKB/AKT1). Residues 39 to 68 (KSMFSSNRQKILERTEILNQEWKQRRIQPV) form an interaction with EED region. Ser-75 is a glycosylation site (O-linked (GlcNAc) serine). Residue Ser-76 is modified to Phosphoserine. A disordered region spans residues 180 to 222 (QYNDDDDDDDGDDPEEREEKQKDLEDHRDDKESRPPRKFPSDK). Positions 182 to 195 (NDDDDDDDGDDPEE) are enriched in acidic residues. The span at 196-222 (REEKQKDLEDHRDDKESRPPRKFPSDK) shows a compositional bias: basic and acidic residues. The segment at 329-522 (EGAKEFAAAL…SSNHVYNYQP (194 aa)) is interaction with CDYL. Phosphothreonine is present on Thr-339. Residues 340 to 426 (AERIKTPPKR…PIKMKPNIEP (87 aa)) form a disordered region. A Phosphothreonine; by CDK1 and CDK2 modification is found at Thr-345. Over residues 345 to 357 (TPPKRPGGRRRGR) the composition is skewed to basic residues. Residues Ser-363 and Ser-366 each carry the phosphoserine modification. Phosphothreonine is present on Thr-367. Positions 374–385 (ESKDTDSDREAG) are enriched in basic and acidic residues. Position 487 is a phosphothreonine (Thr-487). A CXC domain is found at 503–605 (CRKIQLKKDG…SKNVSCKNCS (103 aa)). The SET domain occupies 612-727 (KHLLLAPSDV…TGEELFFDYR (116 aa)). Lys-634 participates in a covalent cross-link: Glycyl lysine isopeptide (Lys-Gly) (interchain with G-Cter in SUMO2).

This sequence belongs to the class V-like SAM-binding methyltransferase superfamily. Histone-lysine methyltransferase family. EZ subfamily. In terms of assembly, component of the PRC2/EED-EZH2 complex, which includes EED, EZH2, SUZ12, RBBP4 and RBBP7 and possibly AEBP2. The minimum components required for methyltransferase activity of the PRC2/EED-EZH2 complex are EED, EZH2 and SUZ12. The PRC2 complex may also interact with DNMT1, DNMT3A, DNMT3B and PHF1 via the EZH2 subunit and with SIRT1 via the SUZ12 subunit. Interacts with HDAC1 and HDAC2. Binds ATRX via the SET domain. Interacts with PRAME. Interacts with CDYL. Interacts with BMAL1, CLOCK and CRY1. Interacts with DNMT3L; the interaction is direct. Interacts with EZHIP; the interaction blocks EZH2 methyltransferase activity. Interacts with ZNF263; recruited to the SIX3 promoter along with other proteins involved in chromatin modification and transcriptional corepression where it contributes to transcriptional repression. Interacts with ARMC12. Interacts with ZMYND8; the interaction is dependent on the presence of chromatin. Interacts with DDX18; this interaction inhibits the PRC2 complex. In terms of processing, phosphorylated by AKT1. Phosphorylation by AKT1 reduces methyltransferase activity. Phosphorylation at Thr-345 by CDK1 and CDK2 promotes maintenance of H3K27me3 levels at EZH2-target loci, thus leading to epigenetic gene silencing. Sumoylated. Post-translationally, glycosylated: O-GlcNAcylation at Ser-75 by OGT increases stability of EZH2 and facilitates the formation of H3K27me3 by the PRC2/EED-EZH2 complex.

It is found in the nucleus. The catalysed reaction is L-lysyl(27)-[histone H3] + 3 S-adenosyl-L-methionine = N(6),N(6),N(6)-trimethyl-L-lysyl(27)-[histone H3] + 3 S-adenosyl-L-homocysteine + 3 H(+). Its function is as follows. Polycomb group (PcG) protein. Catalytic subunit of the PRC2/EED-EZH2 complex, which methylates 'Lys-9' (H3K9me) and 'Lys-27' (H3K27me) of histone H3, leading to transcriptional repression of the affected target gene. Able to mono-, di- and trimethylate 'Lys-27' of histone H3 to form H3K27me1, H3K27me2 and H3K27me3, respectively. Displays a preference for substrates with less methylation, loses activity when progressively more methyl groups are incorporated into H3K27, H3K27me0 &gt; H3K27me1 &gt; H3K27me2. Compared to EZH1-containing complexes, it is more abundant in embryonic stem cells and plays a major role in forming H3K27me3, which is required for embryonic stem cell identity and proper differentiation. The PRC2/EED-EZH2 complex may also serve as a recruiting platform for DNA methyltransferases, thereby linking two epigenetic repression systems. EZH2 can also methylate non-histone proteins such as the transcription factor GATA4 and the nuclear receptor RORA. Regulates the circadian clock via histone methylation at the promoter of the circadian genes. Essential for the CRY1/2-mediated repression of the CLOCK-BMAL1 transcriptional activation of PER1/2. Involved in the di and trimethylation of 'Lys-27' of histone H3 on PER1/2 promoters which is necessary for the CRY1/2 proteins to inhibit transcription. The sequence is that of Histone-lysine N-methyltransferase EZH2 (EZH2) from Macaca fascicularis (Crab-eating macaque).